A 101-amino-acid polypeptide reads, in one-letter code: NADH-quinone oxidoreductase subunit K (101 aa).

The next 3 membrane-spanning stretches (helical) occupy residues 4–24 (LSHY…GIFI), 30–50 (IVIL…LVAF), and 65–85 (FVLT…VVFF).

Belongs to the complex I subunit 4L family. In terms of assembly, NDH-1 is composed of 14 different subunits. Subunits NuoA, H, J, K, L, M, N constitute the membrane sector of the complex.

It is found in the cell inner membrane. It carries out the reaction a quinone + NADH + 5 H(+)(in) = a quinol + NAD(+) + 4 H(+)(out). In terms of biological role, NDH-1 shuttles electrons from NADH, via FMN and iron-sulfur (Fe-S) centers, to quinones in the respiratory chain. The immediate electron acceptor for the enzyme in this species is believed to be ubiquinone. Couples the redox reaction to proton translocation (for every two electrons transferred, four hydrogen ions are translocated across the cytoplasmic membrane), and thus conserves the redox energy in a proton gradient. This chain is NADH-quinone oxidoreductase subunit K, found in Methylobacterium sp. (strain 4-46).